Consider the following 551-residue polypeptide: MSAQEFYQGGNQRGYQQQQFPPPPGGPPQDQNGGKQEYVPPQGQPPNYNMKPSQPYASTNPETGGQPVYQDTAPFSQANEKTGERMNPRKRVNDIIPLILFIAAVVGFAVVSGIAIHGFVQVNGLGGGMGDSSIGRTGSSITLDYHTVYLLLVVVALGLVIASLYLAALRAFTKIILEVTLALTVILNIGICIYYFIIQYWSGAIIFLIIALVSVFFYWGMRKRIPLAKLLLQTTIDVTKHHPSVYVVVFIGLIIQAAVSVWYTFTCIAIYVKWTPGSAACSDGGCSSSKVAGLVFYATFSYLWLSQVIGNVILCTLAGGVFGGWYYYGPRTPGGGVPKRASLLAFVRASTLSLGSIAFGSLLVTILELLRLILQLFRQYEAGQGDMIGSILICIAQCCIGCIQWMVEYFNKYAYIEIALYGKSYIPAAKDTWRLLKDRGIDALVNDSLVGTALMWGAYINGFLCAVLGYFYLRFTHPAYNSDGQYSAPVILFSFLIGLNESFTVGSAIDAGVSTIFVGLGEDPMVLAERSPGLFEMIRQVYPRVVQGVPH.

The tract at residues 1-72 is disordered; it reads MSAQEFYQGG…TGGQPVYQDT (72 aa). The Cytoplasmic segment spans residues 1-94; it reads MSAQEFYQGG…RMNPRKRVND (94 aa). The segment covering 8–19 has biased composition (low complexity); the sequence is QGGNQRGYQQQQ. Residues 45–63 show a composition bias toward polar residues; the sequence is PPNYNMKPSQPYASTNPET. The chain crosses the membrane as a helical span at residues 95–115; it reads IIPLILFIAAVVGFAVVSGIA. Topologically, residues 116-147 are extracellular; sequence IHGFVQVNGLGGGMGDSSIGRTGSSITLDYHT. The chain crosses the membrane as a helical span at residues 148–168; the sequence is VYLLLVVVALGLVIASLYLAA. The Cytoplasmic segment spans residues 169–177; it reads LRAFTKIIL. Residues 178 to 198 form a helical membrane-spanning segment; the sequence is EVTLALTVILNIGICIYYFII. The Extracellular segment spans residues 199 to 200; sequence QY. Residues 201 to 221 traverse the membrane as a helical segment; sequence WSGAIIFLIIALVSVFFYWGM. At 222–244 the chain is on the cytoplasmic side; sequence RKRIPLAKLLLQTTIDVTKHHPS. A helical transmembrane segment spans residues 245-265; the sequence is VYVVVFIGLIIQAAVSVWYTF. The Extracellular segment spans residues 266–307; the sequence is TCIAIYVKWTPGSAACSDGGCSSSKVAGLVFYATFSYLWLSQ. A helical transmembrane segment spans residues 308 to 328; the sequence is VIGNVILCTLAGGVFGGWYYY. The Cytoplasmic segment spans residues 329–356; sequence GPRTPGGGVPKRASLLAFVRASTLSLGS. The helical transmembrane segment at 357-377 threads the bilayer; that stretch reads IAFGSLLVTILELLRLILQLF. Residues 378 to 386 are Extracellular-facing; it reads RQYEAGQGD. Residues 387 to 407 form a helical membrane-spanning segment; the sequence is MIGSILICIAQCCIGCIQWMV. The Cytoplasmic segment spans residues 408–452; it reads EYFNKYAYIEIALYGKSYIPAAKDTWRLLKDRGIDALVNDSLVGT. A helical transmembrane segment spans residues 453 to 473; it reads ALMWGAYINGFLCAVLGYFYL. At 474-488 the chain is on the extracellular side; that stretch reads RFTHPAYNSDGQYSA. The helical transmembrane segment at 489–509 threads the bilayer; it reads PVILFSFLIGLNESFTVGSAI. Residues 510 to 551 lie on the Cytoplasmic side of the membrane; that stretch reads DAGVSTIFVGLGEDPMVLAERSPGLFEMIRQVYPRVVQGVPH.

Belongs to the CTL (choline transporter-like) family.

The protein resides in the cell membrane. Functionally, probably involved in transport through the plasma membrane. The polypeptide is Protein PNS1 (PNS1) (Cryptococcus neoformans var. neoformans serotype D (strain B-3501A) (Filobasidiella neoformans)).